Reading from the N-terminus, the 137-residue chain is ATP synthase epsilon chain, chloroplastic (137 aa).

Belongs to the ATPase epsilon chain family. As to quaternary structure, F-type ATPases have 2 components, CF(1) - the catalytic core - and CF(0) - the membrane proton channel. CF(1) has five subunits: alpha(3), beta(3), gamma(1), delta(1), epsilon(1). CF(0) has three main subunits: a, b and c.

It is found in the plastid. The protein localises to the chloroplast thylakoid membrane. Functionally, produces ATP from ADP in the presence of a proton gradient across the membrane. The protein is ATP synthase epsilon chain, chloroplastic of Agrostis stolonifera (Creeping bentgrass).